The sequence spans 131 residues: Large ribosomal subunit protein bL12 (131 aa).

Belongs to the bacterial ribosomal protein bL12 family. Homodimer. Part of the ribosomal stalk of the 50S ribosomal subunit. Forms a multimeric L10(L12)X complex, where L10 forms an elongated spine to which 2 to 4 L12 dimers bind in a sequential fashion. Binds GTP-bound translation factors.

In terms of biological role, forms part of the ribosomal stalk which helps the ribosome interact with GTP-bound translation factors. Is thus essential for accurate translation. This is Large ribosomal subunit protein bL12 from Prochlorococcus marinus (strain MIT 9515).